A 124-amino-acid polypeptide reads, in one-letter code: Small polypeptide ROTUNDIFOLIA LIKE 3 (124 aa).

Residues 1–25 are disordered; that stretch reads MEDERWKLSSSKGRSKSGRSCSSSS. Residues asparagine 35 and asparagine 38 are each glycosylated (N-linked (GlcNAc...) asparagine). Residues 59 to 75 form a helical membrane-spanning segment; it reads AWSAAGAGGGGASSSSS. The tract at residues 60–95 is disordered; it reads WSAAGAGGGGASSSSSSQHQHQQQQQQSNNSQRLSK. Low complexity predominate over residues 71-91; the sequence is SSSSSSQHQHQQQQQQSNNSQ. Asparagine 88 carries N-linked (GlcNAc...) asparagine glycosylation. The segment at 92–124 is required for DVL/RTFL small polypeptide activity; the sequence is RLSKKCVEAVKEHRARFYIVRRCVSMLVCWRDY.

The protein belongs to the DVL/RTFL small polypeptides family.

It localises to the cell membrane. Small polypeptide acting as a regulatory molecule which coordinates cellular responses required for differentiation, growth and development, probably by restricting polar cell proliferation in lateral organs (e.g. leaves and petioles). This Oryza sativa subsp. indica (Rice) protein is Small polypeptide ROTUNDIFOLIA LIKE 3.